Consider the following 380-residue polypeptide: Chaperone protein DnaJ (380 aa).

The region spanning 5-72 (DYYDTLGVPK…QKRAAYDQYG (68 aa)) is the J domain. Residues 21–47 (IKKAYRKLAMKHHPDRNQGDTSKVSED) form a disordered region. Residues 24 to 34 (AYRKLAMKHHP) show a composition bias toward basic residues. Basic and acidic residues predominate over residues 35 to 47 (DRNQGDTSKVSED). The CR-type zinc-finger motif lies at 139–217 (GKEAQIRIPS…CHGVGKTKNN (79 aa)). The Zn(2+) site is built by cysteine 152, cysteine 155, cysteine 169, cysteine 172, cysteine 191, cysteine 194, cysteine 205, and cysteine 208. CXXCXGXG motif repeat units lie at residues 152–159 (CGICHGTG), 169–176 (CTTCHGHG), 191–198 (CPQCKGSG), and 205–212 (CVACHGVG).

The protein belongs to the DnaJ family. Homodimer. Requires Zn(2+) as cofactor.

It localises to the cytoplasm. Participates actively in the response to hyperosmotic and heat shock by preventing the aggregation of stress-denatured proteins and by disaggregating proteins, also in an autonomous, DnaK-independent fashion. Unfolded proteins bind initially to DnaJ; upon interaction with the DnaJ-bound protein, DnaK hydrolyzes its bound ATP, resulting in the formation of a stable complex. GrpE releases ADP from DnaK; ATP binding to DnaK triggers the release of the substrate protein, thus completing the reaction cycle. Several rounds of ATP-dependent interactions between DnaJ, DnaK and GrpE are required for fully efficient folding. Also involved, together with DnaK and GrpE, in the DNA replication of plasmids through activation of initiation proteins. In Polaromonas naphthalenivorans (strain CJ2), this protein is Chaperone protein DnaJ.